We begin with the raw amino-acid sequence, 352 residues long: C-X-C chemokine receptor type 4 (352 aa).

The interval 1 to 21 (MEGISIYTSDNYTEEMGSGDY) is important for chemokine binding and signaling. Residues 1–38 (MEGISIYTSDNYTEEMGSGDYDSIKEPCFREKNAHFNR) lie on the Extracellular side of the membrane. Tyr7 bears the Sulfotyrosine mark. N-linked (GlcNAc...) asparagine glycosylation occurs at Asn11. Tyr12 is modified (sulfotyrosine). The O-linked (Xyl...) (chondroitin sulfate) serine glycan is linked to Ser18. Position 21 is a sulfotyrosine (Tyr21). Intrachain disulfides connect Cys28-Cys274 and Cys109-Cys186. Residues 39 to 63 (IFLPTIYSIIFLTGIVGNGLVILVM) form a helical membrane-spanning segment. At 64–77 (GYQKKLRSMTDKYR) the chain is on the cytoplasmic side. A helical membrane pass occupies residues 78–99 (LHLSVADLLFVITLPFWAVDAV). Positions 94-97 (WAVD) are chemokine binding. Residues 100–110 (ANWYFGNFLCK) lie on the Extracellular side of the membrane. The helical transmembrane segment at 111–130 (AVHVIYTVNLYSSVLILAFI) threads the bilayer. Positions 113-117 (HVIYT) are chemokine binding. Residues 131-154 (SLDRYLAIVHATNSQKPRKLLAEK) are Cytoplasmic-facing. The Important for signaling signature appears at 133 to 135 (DRY). The tract at residues 135–147 (YLAIVHATNSQKP) is involved in dimerization; when bound to chemokine. The chain crosses the membrane as a helical span at residues 155 to 174 (VVYVGVWIPALLLTIPGFIF). At 175 to 195 (ASVSEADDRFICDRFYPNDLW) the chain is on the extracellular side. The chemokine binding, important for signaling stretch occupies residues 186–190 (CDRFY). Residues 191–210 (PNDLWVVVFQFQHIMVGLIL) are involved in dimerization. The chain crosses the membrane as a helical span at residues 196 to 216 (VVVFQFQHIMVGLILPGIVIL). The Cytoplasmic segment spans residues 217–241 (SCYCIIISKLSHSKGHQKRKALKTT). Residues 242 to 261 (VILILAFFACWLPYYIGISI) traverse the membrane as a helical segment. The Extracellular portion of the chain corresponds to 262-282 (DSFILLEIIKQGCEFENTVHK). Residues 266-268 (LLE) form an involved in dimerization region. Residues 283 to 302 (WISITEALAFFHCCLNPILY) form a helical membrane-spanning segment. Over 303 to 352 (AFLGAKFKTSAQHALTSVSRGSSLKILSKGKRGGHSSVSTESESSSFHSS) the chain is Cytoplasmic. Residues Ser319 and Ser321 each carry the phosphoserine modification. 2 positions are modified to phosphoserine; by PKC and GRK6: Ser324 and Ser325. The disordered stretch occupies residues 329-352 (LSKGKRGGHSSVSTESESSSFHSS). Ser330 bears the Phosphoserine; by GRK6 mark. Residue Lys331 forms a Glycyl lysine isopeptide (Lys-Gly) (interchain with G-Cter in ubiquitin) linkage. Residues 337-352 (HSSVSTESESSSFHSS) are compositionally biased toward low complexity. A Phosphoserine; by GRK6 modification is found at Ser339. A phosphoserine mark is found at Ser348 and Ser351.

It belongs to the G-protein coupled receptor 1 family. Monomer. Can form homodimers. Interacts with CD164. Interacts with ARRB2; the interaction is dependent on the C-terminal phosphorylation of CXCR4 and allows activation of MAPK1 and MAPK3. Interacts with ARR3; the interaction is dependent on the C-terminal phosphorylation of CXCR4 and modulates calcium mobilization. Interacts with RNF113A; the interaction, enhanced by CXCL12, promotes CXCR4 ubiquitination and subsequent degradation. Interacts (via the cytoplasmic C-terminal) with ITCH (via the WW domains I and II); the interaction, enhanced by CXCL12, promotes CXCR4 ubiquitination and leads to its degradation. Interacts with extracellular ubiquitin. Interacts with DBN1; this interaction is enhanced by antigenic stimulation. Following LPS binding, may form a complex with GDF5, HSP90AA1 and HSPA8. In terms of processing, phosphorylated on agonist stimulation. Rapidly phosphorylated on serine and threonine residues in the C-terminal. Phosphorylation at Ser-324 and Ser-325 leads to recruitment of ITCH, ubiquitination and protein degradation. Post-translationally, ubiquitinated after ligand binding, leading to its degradation. Ubiquitinated by ITCH at the cell membrane on agonist stimulation. The ubiquitin-dependent mechanism, endosomal sorting complex required for transport (ESCRT), then targets CXCR4 for lysosomal degradation. This process is dependent also on prior Ser-/Thr-phosphorylation in the C-terminal of CXCR4. Also binding of ARRB1 to STAM negatively regulates CXCR4 sorting to lysosomes though modulating ubiquitination of SFR5S. Sulfation is required for efficient binding of CXCL12/SDF-1alpha and promotes its dimerization. In terms of processing, O- and N-glycosylated. N-glycosylation can mask coreceptor function. The O-glycosylation chondroitin sulfate attachment does not affect interaction with CXCL12/SDF-1alpha nor its coreceptor activity.

The protein resides in the cell membrane. It localises to the cell junction. Its subcellular location is the early endosome. The protein localises to the late endosome. It is found in the lysosome. Receptor for the C-X-C chemokine CXCL12/SDF-1 that transduces a signal by increasing intracellular calcium ion levels and enhancing MAPK1/MAPK3 activation. Involved in the AKT signaling cascade. Plays a role in regulation of cell migration, e.g. during wound healing. Acts as a receptor for extracellular ubiquitin; leading to enhanced intracellular calcium ions and reduced cellular cAMP levels. Binds bacterial lipopolysaccharide (LPS) et mediates LPS-induced inflammatory response, including TNF secretion by monocytes. Involved in hematopoiesis and in cardiac ventricular septum formation. Also plays an essential role in vascularization of the gastrointestinal tract, probably by regulating vascular branching and/or remodeling processes in endothelial cells. Involved in cerebellar development. In the CNS, could mediate hippocampal-neuron survival. This chain is C-X-C chemokine receptor type 4 (CXCR4), found in Cercocebus atys (Sooty mangabey).